The primary structure comprises 318 residues: WRKY transcription factor 28 (318 aa).

Polar residues-rich tracts occupy residues 74–84 (SSEVFNSSIDQ) and 106–115 (RVSPSNSSSS). Positions 74–158 (SSEVFNSSID…KTEVKKQREP (85 aa)) are disordered. Basic and acidic residues-rich tracts occupy residues 116–126 (EADHPGEDSGK) and 148–158 (KKTEVKKQREP). The WRKY DNA-binding region spans 166–231 (SEVDHLEDGY…YEGQHNHPIP (66 aa)).

The protein belongs to the WRKY group II-c family.

It localises to the nucleus. Functionally, transcription factor. Interacts specifically with the W box (5'-(T)TGAC[CT]-3'), a frequently occurring elicitor-responsive cis-acting element. The chain is WRKY transcription factor 28 (WRKY28) from Arabidopsis thaliana (Mouse-ear cress).